Consider the following 187-residue polypeptide: Protein GrpE (187 aa).

The segment covering Met-1–Glu-11 has biased composition (basic and acidic residues). The interval Met-1–Glu-21 is disordered.

The protein belongs to the GrpE family. Homodimer.

It is found in the cytoplasm. Its function is as follows. Participates actively in the response to hyperosmotic and heat shock by preventing the aggregation of stress-denatured proteins, in association with DnaK and GrpE. It is the nucleotide exchange factor for DnaK and may function as a thermosensor. Unfolded proteins bind initially to DnaJ; upon interaction with the DnaJ-bound protein, DnaK hydrolyzes its bound ATP, resulting in the formation of a stable complex. GrpE releases ADP from DnaK; ATP binding to DnaK triggers the release of the substrate protein, thus completing the reaction cycle. Several rounds of ATP-dependent interactions between DnaJ, DnaK and GrpE are required for fully efficient folding. The chain is Protein GrpE from Chlamydia caviae (strain ATCC VR-813 / DSM 19441 / 03DC25 / GPIC) (Chlamydophila caviae).